We begin with the raw amino-acid sequence, 295 residues long: MNGLFDTYHIRRAFSRAAHSYDTNAVLQHEVEQRLLESLDYLGDRIPRVILDVGAGTGRASIAMKKRWPKAQVIALDQAMPMLQEARKRSHWWNPLALIYGDARTLPVADASVDVIFSNLCLQWIEDLPTVFAGFRQALRPGGLLLCSLFGPDTLIELRQAFAQADAVPHISPFPSMPQCGDALVLAHFQNPVLDRDLFTLTYDDLSALMRSLRAIGATNALQERRTTLTGRGRFAATAAAYETLRNADNKLPSSWEVIYACAWAPTSEPMTRENNHEIASIPINSIPIRRRNSS.

Belongs to the methyltransferase superfamily.

The enzyme catalyses malonyl-[ACP] + S-adenosyl-L-methionine = malonyl-[ACP] methyl ester + S-adenosyl-L-homocysteine. It participates in cofactor biosynthesis; biotin biosynthesis. In terms of biological role, converts the free carboxyl group of a malonyl-thioester to its methyl ester by transfer of a methyl group from S-adenosyl-L-methionine (SAM). It allows to synthesize pimeloyl-ACP via the fatty acid synthetic pathway. In Xylella fastidiosa (strain M23), this protein is Malonyl-[acyl-carrier protein] O-methyltransferase.